Here is a 103-residue protein sequence, read N- to C-terminus: Large ribosomal subunit protein bL21 (103 aa).

Belongs to the bacterial ribosomal protein bL21 family. Part of the 50S ribosomal subunit. Contacts protein L20.

In terms of biological role, this protein binds to 23S rRNA in the presence of protein L20. This is Large ribosomal subunit protein bL21 from Yersinia pseudotuberculosis serotype O:1b (strain IP 31758).